We begin with the raw amino-acid sequence, 295 residues long: NAD kinase (295 aa).

D74 serves as the catalytic Proton acceptor. NAD(+)-binding positions include 74 to 75 (DG), 148 to 149 (ND), H159, R176, D178, and 189 to 194 (TAYALS).

It belongs to the NAD kinase family. It depends on a divalent metal cation as a cofactor.

Its subcellular location is the cytoplasm. The enzyme catalyses NAD(+) + ATP = ADP + NADP(+) + H(+). Involved in the regulation of the intracellular balance of NAD and NADP, and is a key enzyme in the biosynthesis of NADP. Catalyzes specifically the phosphorylation on 2'-hydroxyl of the adenosine moiety of NAD to yield NADP. The protein is NAD kinase of Legionella pneumophila (strain Corby).